Reading from the N-terminus, the 331-residue chain is MIDTSIPLVDLHRHLDGNVRVNTIWELGHQHGIALPADSLETLAPFVQIQGKETSLVAFLKKLDWMVAVLADLDAVKRVAYENVADAALSGLDYAELRFSPYYMAMNHKLPIEGVVEAVVDGVKAGLKDYNVKINLIGIMSRSFGQAACTQELEGLLAHKQHLVAMDLAGDELGFPGELFNDHFKRVRDAGLAITAHAGEAAGSQSMWQAIQELGATRIGHGVNAIHDPKLMEYLAKHRIGIESCPTSNLHTSTVVSYAEHPFRTFMDAGVLISLNTDDPGVSAIDIKHEYRIAKSELKLTDAELARVQRNGVEMAFLSDSERKALYAAKI.

His-12 and His-14 together coordinate Zn(2+). Positions 14, 16, and 170 each coordinate substrate. His-197 serves as a coordination point for Zn(2+). The active-site Proton donor is Glu-200. Asp-278 is a binding site for Zn(2+). Asp-279 contacts substrate.

This sequence belongs to the metallo-dependent hydrolases superfamily. Adenosine and AMP deaminases family. Adenosine deaminase subfamily. Zn(2+) serves as cofactor.

The catalysed reaction is adenosine + H2O + H(+) = inosine + NH4(+). The enzyme catalyses 2'-deoxyadenosine + H2O + H(+) = 2'-deoxyinosine + NH4(+). Functionally, catalyzes the hydrolytic deamination of adenosine and 2-deoxyadenosine. This is Adenosine deaminase from Shewanella putrefaciens (strain CN-32 / ATCC BAA-453).